A 159-amino-acid chain; its full sequence is Growth arrest and DNA damage-inducible protein GADD45 gamma (159 aa).

The interval Val-43 to Cys-86 is homodimerization.

Belongs to the GADD45 family. Undergoes concentration-dependent homodimerization, which is required for growth inhibititory activity and enhances interaction with PCNA. Interacts with GADD45GIP1. Interacts with PCNA.

Its function is as follows. Involved in the regulation of growth and apoptosis. Mediates activation of stress-responsive MTK1/MEKK4 MAPKKK. The sequence is that of Growth arrest and DNA damage-inducible protein GADD45 gamma (Gadd45g) from Rattus norvegicus (Rat).